The sequence spans 429 residues: Phosphomethylpyrimidine synthase (429 aa).

Residues Asn-66, Met-95, Tyr-124, His-163, 185-187, 226-229, and Glu-265 contribute to the substrate site; these read SRG and DGLR. His-269 serves as a coordination point for Zn(2+). Tyr-292 lines the substrate pocket. Residue His-333 coordinates Zn(2+). The [4Fe-4S] cluster site is built by Cys-409, Cys-412, and Cys-416.

It belongs to the ThiC family. The cofactor is [4Fe-4S] cluster.

It carries out the reaction 5-amino-1-(5-phospho-beta-D-ribosyl)imidazole + S-adenosyl-L-methionine = 4-amino-2-methyl-5-(phosphooxymethyl)pyrimidine + CO + 5'-deoxyadenosine + formate + L-methionine + 3 H(+). It participates in cofactor biosynthesis; thiamine diphosphate biosynthesis. Its function is as follows. Catalyzes the synthesis of the hydroxymethylpyrimidine phosphate (HMP-P) moiety of thiamine from aminoimidazole ribotide (AIR) in a radical S-adenosyl-L-methionine (SAM)-dependent reaction. The sequence is that of Phosphomethylpyrimidine synthase from Carboxydothermus hydrogenoformans (strain ATCC BAA-161 / DSM 6008 / Z-2901).